We begin with the raw amino-acid sequence, 1054 residues long: Probable sucrose-phosphate synthase 1 (1054 aa).

Residues 104-115 are compositionally biased toward basic and acidic residues; that stretch reads RLERERGRREAV. Disordered regions lie at residues 104 to 125, 674 to 693, and 708 to 727; these read RLER…LSEG, LRNE…SDSL, and DGDK…DDRA.

The protein belongs to the glycosyltransferase 1 family. As to quaternary structure, homodimer or homotetramer.

The enzyme catalyses beta-D-fructose 6-phosphate + UDP-alpha-D-glucose = sucrose 6(F)-phosphate + UDP + H(+). It participates in glycan biosynthesis; sucrose biosynthesis; sucrose from D-fructose 6-phosphate and UDP-alpha-D-glucose: step 1/2. Its activity is regulated as follows. Activity is regulated by phosphorylation and moderated by concentration of metabolites and light. Its function is as follows. Plays a role in photosynthetic sucrose synthesis by catalyzing the rate-limiting step of sucrose biosynthesis from UDP-glucose and fructose- 6-phosphate. Involved in the regulation of carbon partitioning in the leaves of plants. May regulate the synthesis of sucrose and therefore play a major role as a limiting factor in the export of photoassimilates out of the leaf. Plays a role for sucrose availability that is essential for plant growth and fiber elongation. The sequence is that of Probable sucrose-phosphate synthase 1 (SPS1) from Craterostigma plantagineum (Blue gem).